An 89-amino-acid polypeptide reads, in one-letter code: Large ribosomal subunit protein uL24 (89 aa).

It belongs to the universal ribosomal protein uL24 family. Part of the 50S ribosomal subunit.

Functionally, one of two assembly initiator proteins, it binds directly to the 5'-end of the 23S rRNA, where it nucleates assembly of the 50S subunit. One of the proteins that surrounds the polypeptide exit tunnel on the outside of the subunit. The polypeptide is Large ribosomal subunit protein uL24 (Oenococcus oeni (strain ATCC BAA-331 / PSU-1)).